A 358-amino-acid chain; its full sequence is Peptide chain release factor 1 (358 aa).

Glutamine 232 carries the N5-methylglutamine modification.

It belongs to the prokaryotic/mitochondrial release factor family. Methylated by PrmC. Methylation increases the termination efficiency of RF1.

Its subcellular location is the cytoplasm. Peptide chain release factor 1 directs the termination of translation in response to the peptide chain termination codons UAG and UAA. This chain is Peptide chain release factor 1, found in Acidobacterium capsulatum (strain ATCC 51196 / DSM 11244 / BCRC 80197 / JCM 7670 / NBRC 15755 / NCIMB 13165 / 161).